The primary structure comprises 87 residues: Protein Tat (87 aa).

The segment at 1-21 (MDPVDPNLEPWNHPGSQPRTP) is disordered. The interval 1–24 (MDPVDPNLEPWNHPGSQPRTPCNK) is interaction with human CREBBP. Positions 1–48 (MDPVDPNLEPWNHPGSQPRTPCNKCYCKKCCYHCQMCFITKGLGISYG) are transactivation. 3 residues coordinate Zn(2+): C22, C25, and C27. Residues 22–37 (CNKCYCKKCCYHCQMC) are cysteine-rich. The residue at position 28 (K28) is an N6-acetyllysine; by host PCAF. Zn(2+) is bound by residues C30, H33, C34, and C37. Residues 38 to 48 (FITKGLGISYG) form a core region. Positions 45–87 (ISYGRKKRRQRRRPPQGNQAHQDPLPEQPSSQHRGDHPTGPKE) are disordered. The span at 48–58 (GRKKRRQRRRP) shows a compositional bias: basic residues. The Nuclear localization signal, RNA-binding (TAR), and protein transduction signature appears at 49-57 (RKKRRQRRR). The tract at residues 49–87 (RKKRRQRRRPPQGNQAHQDPLPEQPSSQHRGDHPTGPKE) is interaction with the host capping enzyme RNGTT. K50 and K51 each carry N6-acetyllysine; by host EP300 and GCN5L2. Asymmetric dimethylarginine; by host PRMT6 occurs at positions 52 and 53. The span at 77 to 87 (HRGDHPTGPKE) shows a compositional bias: basic and acidic residues. The Cell attachment site signature appears at 78–80 (RGD).

This sequence belongs to the lentiviruses Tat family. Interacts with host CCNT1. Associates with the P-TEFb complex composed at least of Tat, P-TEFb (CDK9 and CCNT1), TAR RNA, RNA Pol II. Recruits the HATs CREBBP, TAF1/TFIID, EP300, PCAF and GCN5L2. Interacts with host KAT5/Tip60; this interaction targets the latter to degradation. Interacts with the host deacetylase SIRT1. Interacts with host capping enzyme RNGTT; this interaction stimulates RNGTT. Binds to host KDR, and to the host integrins ITGAV/ITGB3 and ITGA5/ITGB1. Interacts with host KPNB1/importin beta-1 without previous binding to KPNA1/importin alpha-1. Interacts with EIF2AK2. Interacts with host nucleosome assembly protein NAP1L1; this interaction may be required for the transport of Tat within the nucleus, since the two proteins interact at the nuclear rim. Interacts with host C1QBP/SF2P32; this interaction involves lysine-acetylated Tat. Interacts with the host chemokine receptors CCR2, CCR3 and CXCR4. Interacts with host DPP4/CD26; this interaction may trigger an anti-proliferative effect. Interacts with host LDLR. Interacts with the host extracellular matrix metalloproteinase MMP1. Interacts with host PRMT6; this interaction mediates Tat's methylation. Interacts with, and is ubiquitinated by MDM2/Hdm2. Interacts with host PSMC3 and HTATIP2. Interacts with STAB1; this interaction may overcome SATB1-mediated repression of IL2 and IL2RA (interleukin) in T cells by binding to the same domain than HDAC1. Interacts (when acetylated) with human CDK13, thereby increasing HIV-1 mRNA splicing and promoting the production of the doubly spliced HIV-1 protein Nef. Interacts with host TBP; this interaction modulates the activity of transcriptional pre-initiation complex. Interacts with host RELA. Interacts with host PLSCR1; this interaction negatively regulates Tat transactivation activity by altering its subcellular distribution. Post-translationally, asymmetrical arginine methylation by host PRMT6 seems to diminish the transactivation capacity of Tat and affects the interaction with host CCNT1. Acetylation by EP300, CREBBP, GCN5L2/GCN5 and PCAF regulates the transactivation activity of Tat. EP300-mediated acetylation of Lys-50 promotes dissociation of Tat from the TAR RNA through the competitive binding to PCAF's bromodomain. In addition, the non-acetylated Tat's N-terminus can also interact with PCAF. PCAF-mediated acetylation of Lys-28 enhances Tat's binding to CCNT1. Lys-50 is deacetylated by SIRT1. In terms of processing, polyubiquitination by host MDM2 does not target Tat to degradation, but activates its transactivation function and fosters interaction with CCNT1 and TAR RNA. Post-translationally, phosphorylated by EIF2AK2 on serine and threonine residues adjacent to the basic region important for TAR RNA binding and function. Phosphorylation of Tat by EIF2AK2 is dependent on the prior activation of EIF2AK2 by dsRNA.

The protein localises to the host nucleus. It is found in the host nucleolus. It localises to the host cytoplasm. Its subcellular location is the secreted. Its function is as follows. Transcriptional activator that increases RNA Pol II processivity, thereby increasing the level of full-length viral transcripts. Recognizes a hairpin structure at the 5'-LTR of the nascent viral mRNAs referred to as the transactivation responsive RNA element (TAR) and recruits the cyclin T1-CDK9 complex (P-TEFb complex) that will in turn hyperphosphorylate the RNA polymerase II to allow efficient elongation. The CDK9 component of P-TEFb and other Tat-activated kinases hyperphosphorylate the C-terminus of RNA Pol II that becomes stabilized and much more processive. Other factors such as HTATSF1/Tat-SF1, SUPT5H/SPT5, and HTATIP2 are also important for Tat's function. Besides its effect on RNA Pol II processivity, Tat induces chromatin remodeling of proviral genes by recruiting the histone acetyltransferases (HATs) CREBBP, EP300 and PCAF to the chromatin. This also contributes to the increase in proviral transcription rate, especially when the provirus integrates in transcriptionally silent region of the host genome. To ensure maximal activation of the LTR, Tat mediates nuclear translocation of NF-kappa-B by interacting with host RELA. Through its interaction with host TBP, Tat may also modulate transcription initiation. Tat can reactivate a latently infected cell by penetrating in it and transactivating its LTR promoter. In the cytoplasm, Tat is thought to act as a translational activator of HIV-1 mRNAs. Functionally, extracellular circulating Tat can be endocytosed by surrounding uninfected cells via the binding to several surface receptors such as CD26, CXCR4, heparan sulfate proteoglycans (HSPG) or LDLR. Neurons are rarely infected, but they internalize Tat via their LDLR. Through its interaction with nuclear HATs, Tat is potentially able to control the acetylation-dependent cellular gene expression. Modulates the expression of many cellular genes involved in cell survival, proliferation or in coding for cytokines or cytokine receptors. Tat plays a role in T-cell and neurons apoptosis. Tat induced neurotoxicity and apoptosis probably contribute to neuroAIDS. Circulating Tat also acts as a chemokine-like and/or growth factor-like molecule that binds to specific receptors on the surface of the cells, affecting many cellular pathways. In the vascular system, Tat binds to ITGAV/ITGB3 and ITGA5/ITGB1 integrins dimers at the surface of endothelial cells and competes with bFGF for heparin-binding sites, leading to an excess of soluble bFGF. The polypeptide is Protein Tat (Homo sapiens (Human)).